A 344-amino-acid polypeptide reads, in one-letter code: Nicotinate-nucleotide--dimethylbenzimidazole phosphoribosyltransferase (344 aa).

Glu-305 (proton acceptor) is an active-site residue.

It belongs to the CobT family.

The catalysed reaction is 5,6-dimethylbenzimidazole + nicotinate beta-D-ribonucleotide = alpha-ribazole 5'-phosphate + nicotinate + H(+). It functions in the pathway nucleoside biosynthesis; alpha-ribazole biosynthesis; alpha-ribazole from 5,6-dimethylbenzimidazole: step 1/2. Its function is as follows. Catalyzes the synthesis of alpha-ribazole-5'-phosphate from nicotinate mononucleotide (NAMN) and 5,6-dimethylbenzimidazole (DMB). This Agrobacterium fabrum (strain C58 / ATCC 33970) (Agrobacterium tumefaciens (strain C58)) protein is Nicotinate-nucleotide--dimethylbenzimidazole phosphoribosyltransferase.